A 257-amino-acid polypeptide reads, in one-letter code: Phosphate import ATP-binding protein PstB (257 aa).

Positions 5 to 246 (LEIKDLTAFY…EVIFTSPKNE (242 aa)) constitute an ABC transporter domain. An ATP-binding site is contributed by 37-44 (GPSGCGKS).

The protein belongs to the ABC transporter superfamily. Phosphate importer (TC 3.A.1.7) family. The complex is composed of two ATP-binding proteins (PstB), two transmembrane proteins (PstC and PstA) and a solute-binding protein (PstS).

It localises to the cell membrane. It catalyses the reaction phosphate(out) + ATP + H2O = ADP + 2 phosphate(in) + H(+). Functionally, part of the ABC transporter complex PstSACB involved in phosphate import. Responsible for energy coupling to the transport system. This is Phosphate import ATP-binding protein PstB from Tropheryma whipplei (strain TW08/27) (Whipple's bacillus).